The following is a 344-amino-acid chain: MVKIGIIGATGYVGAELLRLLLSHPKVEVAALSSVSFEGQEISNIYKNFLSKTNLICESAHDVVEKCDVIFTALPHGLSEDIAKKALDNKKVCIDMGADFRLSSEKEYEKWYGKKFTQPEIHTESVYGLPELNRDKIKECSLIANPGCYPTTIELGLMPLLKNSLIKLDNIICDSKSGTTGAGRGLTLNTHFPEENETFAPYKVGAHRHTPEIEETLSSMAEDNVNVTFTPHLLPINRGIVSTIYCIPRDKVNLEEIHKLYTEFYKDERFVNVLPLGDTASIKNVRLTNDCHISLHLNHREDQIIIISTIDNMIKGAAGQAIQNMNIILGFNEAEGLNLIAPAF.

Cysteine 148 is a catalytic residue.

Belongs to the NAGSA dehydrogenase family. Type 1 subfamily.

It is found in the cytoplasm. It catalyses the reaction N-acetyl-L-glutamate 5-semialdehyde + phosphate + NADP(+) = N-acetyl-L-glutamyl 5-phosphate + NADPH + H(+). It participates in amino-acid biosynthesis; L-arginine biosynthesis; N(2)-acetyl-L-ornithine from L-glutamate: step 3/4. Functionally, catalyzes the NADPH-dependent reduction of N-acetyl-5-glutamyl phosphate to yield N-acetyl-L-glutamate 5-semialdehyde. The polypeptide is N-acetyl-gamma-glutamyl-phosphate reductase (Clostridium beijerinckii (strain ATCC 51743 / NCIMB 8052) (Clostridium acetobutylicum)).